The following is a 236-amino-acid chain: UPF0257 lipoprotein YnfC (236 aa).

The first 16 residues, 1-16 (MKYKLLPCLLAIFLTG), serve as a signal peptide directing secretion. Cys-17 carries N-palmitoyl cysteine lipidation. Cys-17 carries the S-diacylglycerol cysteine lipid modification.

The protein belongs to the UPF0257 family.

It is found in the cell membrane. The polypeptide is UPF0257 lipoprotein YnfC (ynfC) (Shigella flexneri).